We begin with the raw amino-acid sequence, 117 residues long: Large ribosomal subunit protein bL20 (117 aa).

Belongs to the bacterial ribosomal protein bL20 family.

Its function is as follows. Binds directly to 23S ribosomal RNA and is necessary for the in vitro assembly process of the 50S ribosomal subunit. It is not involved in the protein synthesizing functions of that subunit. This is Large ribosomal subunit protein bL20 from Wolinella succinogenes (strain ATCC 29543 / DSM 1740 / CCUG 13145 / JCM 31913 / LMG 7466 / NCTC 11488 / FDC 602W) (Vibrio succinogenes).